Here is a 718-residue protein sequence, read N- to C-terminus: Peroxisomal bifunctional enzyme (718 aa).

Residues Met-1–Ser-280 are enoyl-CoA hydratase / isomerase. Position 38 is an N6-succinyllysine (Lys-38). Position 99 (Gly-99) interacts with substrate. N6-acetyllysine; alternate is present on residues Lys-163 and Lys-172. An N6-succinyllysine; alternate mark is found at Lys-163 and Lys-172. An N6-succinyllysine modification is found at Lys-181. N6-acetyllysine; alternate is present on residues Lys-189 and Lys-217. 2 positions are modified to N6-succinyllysine; alternate: Lys-189 and Lys-217. Lys-240 carries the N6-succinyllysine modification. Lys-248 carries the post-translational modification N6-acetyllysine. The residue at position 252 (Lys-252) is an N6-succinyllysine. Lys-274 carries the post-translational modification N6-acetyllysine; alternate. An N6-succinyllysine; alternate modification is found at Lys-274. Residues Lys-278, Lys-288, and Lys-329 each carry the N6-succinyllysine modification. Residues Thr-281–Gly-567 form a 3-hydroxyacyl-CoA dehydrogenase region. 4 positions are modified to N6-acetyllysine: Lys-344, Lys-348, Lys-355, and Lys-459. N6-succinyllysine is present on Lys-527. Thr-543 carries the post-translational modification Phosphothreonine. Lys-572 is subject to N6-succinyllysine. Lys-579, Lys-586, and Lys-705 each carry N6-acetyllysine; alternate. Lys-579, Lys-586, and Lys-705 each carry N6-succinyllysine; alternate. The Microbody targeting signal signature appears at Ser-716–Leu-718. Lys-717 is subject to N6-succinyllysine.

The protein in the N-terminal section; belongs to the enoyl-CoA hydratase/isomerase family. It in the C-terminal section; belongs to the 3-hydroxyacyl-CoA dehydrogenase family. Monomer. In terms of processing, acetylated, leading to enhanced enzyme activity. Acetylation is enhanced by up to 80% after treatment either with trichostin A (TCA) or with nicotinamide (NAM) with highest increase on Lys-344. Acetylation and enzyme activity increased by about 1.5% on addition of fatty acids.

Its subcellular location is the peroxisome. The enzyme catalyses a (3S)-3-hydroxyacyl-CoA = a (2E)-enoyl-CoA + H2O. It catalyses the reaction a 4-saturated-(3S)-3-hydroxyacyl-CoA = a (3E)-enoyl-CoA + H2O. The catalysed reaction is a (3Z)-enoyl-CoA = a 4-saturated (2E)-enoyl-CoA. It carries out the reaction a (3E)-enoyl-CoA = a 4-saturated (2E)-enoyl-CoA. The enzyme catalyses a (3S)-3-hydroxyacyl-CoA + NAD(+) = a 3-oxoacyl-CoA + NADH + H(+). It catalyses the reaction (2S,3S)-3-hydroxy-2-methylbutanoyl-CoA = (2E)-2-methylbut-2-enoyl-CoA + H2O. The catalysed reaction is (2E)-dodecenedioyl-CoA + H2O = (3S)-hydroxydodecanedioyl-CoA. It carries out the reaction (3S)-hydroxydodecanedioyl-CoA + NAD(+) = 3-oxododecanedioyl-CoA + NADH + H(+). The enzyme catalyses (2E)-octenedioyl-CoA + H2O = (3S)-hydroxyoctanedioyl-CoA. It catalyses the reaction (3S)-hydroxyoctanedioyl-CoA + NAD(+) = 3-oxooctanedioyl-CoA + NADH + H(+). The catalysed reaction is (2E)-decenedioyl-CoA + H2O = (3S)-hydroxydecanedioyl-CoA. It carries out the reaction (3S)-hydroxydecanedioyl-CoA + NAD(+) = 3-oxodecanedioyl-CoA + NADH + H(+). The enzyme catalyses (2E)-tetradecenedioyl-CoA + H2O = (3S)-hydroxytetradecanedioyl-CoA. It catalyses the reaction (3S)-hydroxytetradecanedioyl-CoA + NAD(+) = 3-oxotetradecanedioyl-CoA + NADH + H(+). The catalysed reaction is (3E,5Z)-tetradecadienoyl-CoA = (2E,5Z)-tetradecadienoyl-CoA. It carries out the reaction (3E,5Z)-octadienoyl-CoA = (2E,5Z)-octadienoyl-CoA. The enzyme catalyses (3S)-hydroxydecanoyl-CoA + NAD(+) = 3-oxodecanoyl-CoA + NADH + H(+). It catalyses the reaction (3E)-decenoyl-CoA = (2E)-decenoyl-CoA. The catalysed reaction is (3Z)-hexenoyl-CoA = (2E)-hexenoyl-CoA. It carries out the reaction (3E)-hexenoyl-CoA = (2E)-hexenoyl-CoA. The enzyme catalyses (3S)-hydroxydecanoyl-CoA = (2E)-decenoyl-CoA + H2O. It catalyses the reaction (3S)-hydroxyhexanoyl-CoA = (2E)-hexenoyl-CoA + H2O. The catalysed reaction is (3S)-hydroxyhexadecanoyl-CoA + NAD(+) = 3-oxohexadecanoyl-CoA + NADH + H(+). It carries out the reaction (3S)-hydroxyhexadecanoyl-CoA = (2E)-hexadecenoyl-CoA + H2O. The enzyme catalyses (2E)-hexadecenedioyl-CoA + H2O = (3S)-hydroxyhexadecanedioyl-CoA. It catalyses the reaction (3S)-hydroxyhexadecanedioyl-CoA + NAD(+) = 3-oxohexadecanedioyl-CoA + NADH + H(+). It participates in lipid metabolism; fatty acid beta-oxidation. Its activity is regulated as follows. Enzyme activity enhanced by acetylation. Peroxisomal trifunctional enzyme possessing 2-enoyl-CoA hydratase, 3-hydroxyacyl-CoA dehydrogenase, and delta 3, delta 2-enoyl-CoA isomerase activities. Catalyzes two of the four reactions of the long chain fatty acids peroxisomal beta-oxidation pathway. Can also use branched-chain fatty acids such as 2-methyl-2E-butenoyl-CoA as a substrate, which is hydrated into (2S,3S)-3-hydroxy-2-methylbutanoyl-CoA. Optimal isomerase for 2,5 double bonds into 3,5 form isomerization in a range of enoyl-CoA species. Also able to isomerize both 3-cis and 3-trans double bonds into the 2-trans form in a range of enoyl-CoA species. With HSD17B4, catalyzes the hydration of trans-2-enoyl-CoA and the dehydrogenation of 3-hydroxyacyl-CoA, but with opposite chiral specificity. Regulates the amount of medium-chain dicarboxylic fatty acids which are essential regulators of all fatty acid oxidation pathways. Also involved in the degradation of long-chain dicarboxylic acids through peroxisomal beta-oxidation. This is Peroxisomal bifunctional enzyme from Mus musculus (Mouse).